Consider the following 95-residue polypeptide: Aspartyl/glutamyl-tRNA(Asn/Gln) amidotransferase subunit C (95 aa).

It belongs to the GatC family. Heterotrimer of A, B and C subunits.

It catalyses the reaction L-glutamyl-tRNA(Gln) + L-glutamine + ATP + H2O = L-glutaminyl-tRNA(Gln) + L-glutamate + ADP + phosphate + H(+). The catalysed reaction is L-aspartyl-tRNA(Asn) + L-glutamine + ATP + H2O = L-asparaginyl-tRNA(Asn) + L-glutamate + ADP + phosphate + 2 H(+). Allows the formation of correctly charged Asn-tRNA(Asn) or Gln-tRNA(Gln) through the transamidation of misacylated Asp-tRNA(Asn) or Glu-tRNA(Gln) in organisms which lack either or both of asparaginyl-tRNA or glutaminyl-tRNA synthetases. The reaction takes place in the presence of glutamine and ATP through an activated phospho-Asp-tRNA(Asn) or phospho-Glu-tRNA(Gln). In Chlorobium phaeobacteroides (strain DSM 266 / SMG 266 / 2430), this protein is Aspartyl/glutamyl-tRNA(Asn/Gln) amidotransferase subunit C.